Consider the following 228-residue polypeptide: DOPA 4,5-dioxygenase (228 aa).

As to quaternary structure, homodimer. Expressed at high level in coloured cap tissue and at least 10 times lower level in the stipe.

The protein resides in the cytoplasm. The protein operates within pigment biosynthesis; betalain biosynthesis. Its function is as follows. Extradiol dioxygenase that opens up the cyclic ring of DOPA between carbons 4 and 5 thus producing an unstable seco-DOPA that rearranges non-enzymatically to betalamic acid. Can also catalyze the formation of muscaflavin (a pigment found in the hygrocybe mushrooms family and of some amanita species only) by a 2,3-extradiol cleavage of DOPA. In Amanita muscaria (Fly agaric), this protein is DOPA 4,5-dioxygenase (DODA).